A 377-amino-acid chain; its full sequence is tRNA 2-selenouridine synthase (377 aa).

One can recognise a Rhodanese domain in the interval 18 to 141 (ITRGVTLIDV…LRQEAMDATD (124 aa)). The active-site S-selanylcysteine intermediate is the Cys-101.

This sequence belongs to the SelU family. In terms of assembly, monomer.

The enzyme catalyses 5-methylaminomethyl-2-thiouridine(34) in tRNA + selenophosphate + (2E)-geranyl diphosphate + H2O + H(+) = 5-methylaminomethyl-2-selenouridine(34) in tRNA + (2E)-thiogeraniol + phosphate + diphosphate. The catalysed reaction is 5-methylaminomethyl-2-thiouridine(34) in tRNA + (2E)-geranyl diphosphate = 5-methylaminomethyl-S-(2E)-geranyl-thiouridine(34) in tRNA + diphosphate. It catalyses the reaction 5-methylaminomethyl-S-(2E)-geranyl-thiouridine(34) in tRNA + selenophosphate + H(+) = 5-methylaminomethyl-2-(Se-phospho)selenouridine(34) in tRNA + (2E)-thiogeraniol. It carries out the reaction 5-methylaminomethyl-2-(Se-phospho)selenouridine(34) in tRNA + H2O = 5-methylaminomethyl-2-selenouridine(34) in tRNA + phosphate. Functionally, involved in the post-transcriptional modification of the uridine at the wobble position (U34) of tRNA(Lys), tRNA(Glu) and tRNA(Gln). Catalyzes the conversion of 2-thiouridine (S2U-RNA) to 2-selenouridine (Se2U-RNA). Acts in a two-step process involving geranylation of 2-thiouridine (S2U) to S-geranyl-2-thiouridine (geS2U) and subsequent selenation of the latter derivative to 2-selenouridine (Se2U) in the tRNA chain. The protein is tRNA 2-selenouridine synthase of Cronobacter sakazakii (strain ATCC BAA-894) (Enterobacter sakazakii).